The sequence spans 212 residues: ER lumen protein-retaining receptor 1-A (212 aa).

At 1 to 4 the chain is on the lumenal side; sequence MNIF. The chain crosses the membrane as a helical span at residues 5–24; the sequence is RFLGDISHLSAIFILLLKIW. The Cytoplasmic segment spans residues 25–32; the sequence is KSRSCAGI. Residues 33 to 52 traverse the membrane as a helical segment; that stretch reads SGKSQLLFAIVFTARYLDLF. The interaction with the K-D-E-L motif on target proteins stretch occupies residues 47–48; the sequence is RY. Residues 53 to 58 lie on the Lumenal side of the membrane; that stretch reads TNYISF. Residues 59-79 traverse the membrane as a helical segment; sequence YNTSMKVVYVASSYATVWMIY. The Cytoplasmic portion of the chain corresponds to 80–92; that stretch reads SKFKATYDGNHDT. Residues 93 to 110 form a helical membrane-spanning segment; that stretch reads FRVEFLIVPTAILAFLVN. The Lumenal portion of the chain corresponds to 111–116; it reads HDFTPL. Residues 117–135 form a helical membrane-spanning segment; the sequence is EIFWTFSIYLESVAILPQL. Over 136 to 149 the chain is Cytoplasmic; the sequence is FMVSKTGEAETITS. A helical transmembrane segment spans residues 150-168; it reads HYLFALGIYRTLYLFNWIW. Positions 159 to 169 are interaction with the K-D-E-L motif on target proteins; the sequence is RTLYLFNWIWR. The Lumenal segment spans residues 169-178; the sequence is RYQFEGFFDL. Residues 179 to 199 traverse the membrane as a helical segment; sequence IAIVAGLVQTVLYCDFFYLYV. The Cytoplasmic portion of the chain corresponds to 200 to 212; sequence TKVLKGKKLSLPA. The segment at 204–207 is important for recycling of cargo proteins with the sequence motif K-D-E-L from the Golgi to the endoplasmic reticulum; it reads KGKK.

Belongs to the ERD2 family.

Its subcellular location is the golgi apparatus membrane. The protein resides in the cytoplasmic vesicle. It localises to the COPI-coated vesicle membrane. The protein localises to the endoplasmic reticulum membrane. It is found in the endoplasmic reticulum-Golgi intermediate compartment membrane. Functionally, receptor for the C-terminal sequence motif K-D-E-L that is present on endoplasmic reticulum resident proteins and that mediates their recycling from the Golgi back to the endoplasmic reticulum. The sequence is that of ER lumen protein-retaining receptor 1-A (kdelr1-a) from Xenopus laevis (African clawed frog).